The following is a 68-amino-acid chain: DNA-directed RNA polymerase subunit omega (68 aa).

This sequence belongs to the RNA polymerase subunit omega family. As to quaternary structure, the RNAP catalytic core consists of 2 alpha, 1 beta, 1 beta' and 1 omega subunit. When a sigma factor is associated with the core the holoenzyme is formed, which can initiate transcription.

The enzyme catalyses RNA(n) + a ribonucleoside 5'-triphosphate = RNA(n+1) + diphosphate. Functionally, promotes RNA polymerase assembly. Latches the N- and C-terminal regions of the beta' subunit thereby facilitating its interaction with the beta and alpha subunits. The polypeptide is DNA-directed RNA polymerase subunit omega (Syntrophotalea carbinolica (strain DSM 2380 / NBRC 103641 / GraBd1) (Pelobacter carbinolicus)).